A 117-amino-acid polypeptide reads, in one-letter code: MTRIKRGYIARRRRTKIRLFASSFQGARSRLTRTITQQKIRALVSAHQDRGRQKRDFRRLWITRINAVIRANKVYYSYSTLIHHLYKRQLLLNRKILAQIAILNRNCLYMISNEILK.

This sequence belongs to the bacterial ribosomal protein bL20 family.

Its subcellular location is the plastid. The protein localises to the chloroplast. Binds directly to 23S ribosomal RNA and is necessary for the in vitro assembly process of the 50S ribosomal subunit. It is not involved in the protein synthesizing functions of that subunit. The sequence is that of Large ribosomal subunit protein bL20c from Morus indica (Mulberry).